We begin with the raw amino-acid sequence, 816 residues long: Phosphatidylinositol 4-kinase beta (816 aa).

Disordered stretches follow at residues Met-1–Leu-30, Glu-101–Arg-120, and Arg-250–Ser-318. Gly-2 carries the N-acetylglycine modification. The interaction with ACBD3 stretch occupies residues Gly-2 to Ile-68. Over residues Thr-10 to Leu-30 the composition is skewed to low complexity. Residues Cys-52–Ser-242 form the PIK helical domain. At Ser-258 the chain carries Phosphoserine. A Phosphothreonine modification is found at Thr-263. A phosphoserine mark is found at Ser-266, Ser-275, Ser-277, Ser-284, and Ser-294. Composition is skewed to polar residues over residues Asp-278–Lys-297 and Ser-306–Ser-318. Ser-428 is subject to Phosphoserine. Thr-438 carries the post-translational modification Phosphothreonine. Position 511 is a phosphoserine (Ser-511). Phosphothreonine is present on residues Thr-517 and Thr-519. A PI3K/PI4K catalytic domain is found at Glu-535–Thr-801. The segment at Val-541–Gly-547 is G-loop. The catalytic loop stretch occupies residues Gln-668 to Asn-676. The activation loop stretch occupies residues His-687 to Thr-711.

This sequence belongs to the PI3/PI4-kinase family. Type III PI4K subfamily. In terms of assembly, interacts with ARF1 and ARF3 in the Golgi complex, but not with ARF4, ARF5 or ARF6. Interacts with NCS1/FREQ in a calcium-independent manner. Interacts with CALN1/CABP8 and CALN2/CABP7; in a calcium-dependent manner; this interaction competes with NCS1/FREQ binding. Interacts with ACBD3. Interacts with ARMH3, YWHAB, YWHAE, YWHAG, YWHAH, YWHAQ, YWHAZ and SFN. Interacts with GGA2 (via VHS domain); the interaction is important for PI4KB location at the Golgi apparatus membrane. Interacts with ATG9A. It depends on Mg(2+) as a cofactor. Mn(2+) serves as cofactor.

It is found in the endomembrane system. The protein resides in the mitochondrion outer membrane. It localises to the rough endoplasmic reticulum membrane. Its subcellular location is the golgi apparatus. The protein localises to the golgi apparatus membrane. The catalysed reaction is a 1,2-diacyl-sn-glycero-3-phospho-(1D-myo-inositol) + ATP = a 1,2-diacyl-sn-glycero-3-phospho-(1D-myo-inositol 4-phosphate) + ADP + H(+). With respect to regulation, inhibited by wortmannin. Increased kinase activity upon interaction with NCS1/FREQ. Functionally, phosphorylates phosphatidylinositol (PI) in the first committed step in the production of the second messenger inositol-1,4,5,-trisphosphate (PIP). May regulate Golgi disintegration/reorganization during mitosis, possibly via its phosphorylation. Involved in Golgi-to-plasma membrane trafficking. May play an important role in the inner ear development. The polypeptide is Phosphatidylinositol 4-kinase beta (Pi4kb) (Mus musculus (Mouse)).